A 398-amino-acid chain; its full sequence is Bifunctional enzyme IspD/IspF (398 aa).

The segment at 1–234 (MPNPPRTAAI…SRLTALLGDI (234 aa)) is 2-C-methyl-D-erythritol 4-phosphate cytidylyltransferase. Positions 235-398 (RTGTGYDVHA…LPWGAEGLAG (164 aa)) are 2-C-methyl-D-erythritol 2,4-cyclodiphosphate synthase. A divalent metal cation-binding residues include D241 and H243. 4-CDP-2-C-methyl-D-erythritol 2-phosphate contacts are provided by residues 241 to 243 (DVH) and 267 to 268 (HS). H275 serves as a coordination point for a divalent metal cation. Residues 289–291 (DIG), 365–368 (TTSE), F372, and R375 contribute to the 4-CDP-2-C-methyl-D-erythritol 2-phosphate site.

In the N-terminal section; belongs to the IspD/TarI cytidylyltransferase family. IspD subfamily. This sequence in the C-terminal section; belongs to the IspF family. The cofactor is a divalent metal cation.

The catalysed reaction is 2-C-methyl-D-erythritol 4-phosphate + CTP + H(+) = 4-CDP-2-C-methyl-D-erythritol + diphosphate. The enzyme catalyses 4-CDP-2-C-methyl-D-erythritol 2-phosphate = 2-C-methyl-D-erythritol 2,4-cyclic diphosphate + CMP. It functions in the pathway isoprenoid biosynthesis; isopentenyl diphosphate biosynthesis via DXP pathway; isopentenyl diphosphate from 1-deoxy-D-xylulose 5-phosphate: step 2/6. Its pathway is isoprenoid biosynthesis; isopentenyl diphosphate biosynthesis via DXP pathway; isopentenyl diphosphate from 1-deoxy-D-xylulose 5-phosphate: step 4/6. Bifunctional enzyme that catalyzes the formation of 4-diphosphocytidyl-2-C-methyl-D-erythritol from CTP and 2-C-methyl-D-erythritol 4-phosphate (MEP) (IspD), and catalyzes the conversion of 4-diphosphocytidyl-2-C-methyl-D-erythritol 2-phosphate (CDP-ME2P) to 2-C-methyl-D-erythritol 2,4-cyclodiphosphate (ME-CPP) with a corresponding release of cytidine 5-monophosphate (CMP) (IspF). The sequence is that of Bifunctional enzyme IspD/IspF from Rhodopseudomonas palustris (strain BisB5).